A 1623-amino-acid chain; its full sequence is ATP-binding cassette sub-family A member 9 (1623 aa).

A helical membrane pass occupies residues 31 to 51 (LLEWLFSLLLILFVYQLSSNL). An N-linked (GlcNAc...) asparagine glycan is attached at N120. Helical transmembrane passes span 225-245 (FFIFFCVISFSSLIYYLSVNI), 265-285 (AFWLSWSLMYAGFILVVAVLM), 295-315 (VVLTGFMVVFLLFLFYGLSLI), 329-349 (FLTGLAIFILTVFWGSLGFTA), 354-374 (LPAFVEWTLCFLSPFAFTTGM), and 398-418 (LIMATLFMLVLDALLYLVLAL). An ABC transporter 1 domain is found at 481–716 (IRIKNLKKEY…WGIGYHLSLH (236 aa)). 517–524 (GHSGAGKT) lines the ATP pocket. A run of 7 helical transmembrane segments spans residues 863 to 883 (LMTVLLLFGISFVPQLLEHLV), 1025 to 1045 (AFFWIPVAASLTPYIAMGSIS), 1071 to 1091 (LVDIPIYFLILFLMQIMDSVF), 1107 to 1127 (IPCSIGYASSLIFMTYVISFI), 1135 to 1155 (SGIWSFFFLIVTIFFIIATDI), 1163 to 1183 (LLICTFLVPPFTLIGSLLIFS), and 1199 to 1219 (QLVFLALLIPYLHFLLFFFIL). Positions 1287 to 1520 (LRKEYIGRTK…FGKDYLLEMK (234 aa)) constitute an ABC transporter 2 domain. 1325–1332 (GHNGAGKS) lines the ATP pocket.

Belongs to the ABC transporter superfamily. ABCA family. In terms of tissue distribution, highly expressed in heart and to lower extent in kidney, brain and spleen. Weakly expressed in developing and adult brains. Weakly expressed in the cerebellar granular layer at P14 and P21.

The protein resides in the membrane. In terms of biological role, transporter that may play a role in monocyte differentiation and lipid transport and homeostasis. This Mus musculus (Mouse) protein is ATP-binding cassette sub-family A member 9 (Abca9).